A 406-amino-acid polypeptide reads, in one-letter code: Argininosuccinate synthase (406 aa).

ATP is bound by residues 13–21 (AYSGGLDTS) and Ala-40. Positions 91 and 96 each coordinate L-citrulline. Residue Gly-121 participates in ATP binding. L-aspartate contacts are provided by Thr-123, Asn-127, and Asp-128. Asn-127 is a binding site for L-citrulline. Positions 131, 182, 191, 267, and 279 each coordinate L-citrulline.

It belongs to the argininosuccinate synthase family. Type 1 subfamily. As to quaternary structure, homotetramer.

It is found in the cytoplasm. It carries out the reaction L-citrulline + L-aspartate + ATP = 2-(N(omega)-L-arginino)succinate + AMP + diphosphate + H(+). It participates in amino-acid biosynthesis; L-arginine biosynthesis; L-arginine from L-ornithine and carbamoyl phosphate: step 2/3. This Brucella anthropi (strain ATCC 49188 / DSM 6882 / CCUG 24695 / JCM 21032 / LMG 3331 / NBRC 15819 / NCTC 12168 / Alc 37) (Ochrobactrum anthropi) protein is Argininosuccinate synthase.